The following is a 356-amino-acid chain: 3-dehydroquinate synthase (356 aa).

NAD(+) is bound by residues Glu-71–Lys-76, Gly-105–Asp-109, Thr-129–Ser-130, Lys-142, and Lys-151. Positions 184, 247, and 264 each coordinate Zn(2+).

The protein belongs to the sugar phosphate cyclases superfamily. Dehydroquinate synthase family. Co(2+) is required as a cofactor. Requires Zn(2+) as cofactor. The cofactor is NAD(+).

It is found in the cytoplasm. It catalyses the reaction 7-phospho-2-dehydro-3-deoxy-D-arabino-heptonate = 3-dehydroquinate + phosphate. It functions in the pathway metabolic intermediate biosynthesis; chorismate biosynthesis; chorismate from D-erythrose 4-phosphate and phosphoenolpyruvate: step 2/7. Its function is as follows. Catalyzes the conversion of 3-deoxy-D-arabino-heptulosonate 7-phosphate (DAHP) to dehydroquinate (DHQ). The protein is 3-dehydroquinate synthase of Lactococcus lactis subsp. cremoris (strain MG1363).